We begin with the raw amino-acid sequence, 467 residues long: Gamma-aminobutyric acid receptor subunit gamma-3 (467 aa).

A signal peptide spans 1–17 (MAAKLLLLLCLFSGLHA). Residues 18-256 (RSRRVEEDDS…FELSRRMGYF (239 aa)) lie on the Extracellular side of the membrane. N-linked (GlcNAc...) asparagine glycosylation is present at Asn110. A disulfide bridge connects residues Cys171 and Cys185. Asn228 carries an N-linked (GlcNAc...) asparagine glycan. The chain crosses the membrane as a helical span at residues 257-277 (TIQTYIPCILTVVLSWVSFWI). Residues 278-283 (KKDATP) lie on the Cytoplasmic side of the membrane. Residues 284 to 303 (ARTTLGITTVLTMTTLSTIA) traverse the membrane as a helical segment. Topologically, residues 304–311 (RKSLPRVS) are extracellular. A helical membrane pass occupies residues 312–332 (YVTAMDLFVTVCFLFVFAALM). Topologically, residues 333-446 (EYATLNYYSS…DVSELDSYSR (114 aa)) are cytoplasmic. A helical transmembrane segment spans residues 447–467 (VFFPTSFLLFNLVYWVGYLYL).

It belongs to the ligand-gated ion channel (TC 1.A.9) family. Gamma-aminobutyric acid receptor (TC 1.A.9.5) subfamily. GABRG3 sub-subfamily. In terms of assembly, heteropentamer, formed by a combination of alpha (GABRA1-6), beta (GABRB1-3), gamma (GABRG1-3), delta (GABRD), epsilon (GABRE), rho (GABRR1-3), pi (GABRP) and theta (GABRQ) chains, each subunit exhibiting distinct physiological and pharmacological properties. May be palmitoylated. Expressed in brain.

The protein resides in the postsynaptic cell membrane. The protein localises to the cell membrane. The enzyme catalyses chloride(in) = chloride(out). Its activity is regulated as follows. Allosterically potentiated by alphaxalone. Allosterically inhibited by pregnenolone sulfate. Inhibited by zinc and lanthanum. In terms of biological role, gamma subunit of the heteropentameric ligand-gated chloride channel gated by gamma-aminobutyric acid (GABA), a major inhibitory neurotransmitter in the brain. GABA-gated chloride channels, also named GABA(A) receptors (GABAAR), consist of five subunits arranged around a central pore and contain GABA active binding site(s) located at the alpha and beta subunit interface(s). When activated by GABA, GABAARs selectively allow the flow of chloride across the cell membrane down their electrochemical gradient. This chain is Gamma-aminobutyric acid receptor subunit gamma-3, found in Rattus norvegicus (Rat).